Here is a 177-residue protein sequence, read N- to C-terminus: Large ribosomal subunit protein uL6 (177 aa).

The protein belongs to the universal ribosomal protein uL6 family. As to quaternary structure, part of the 50S ribosomal subunit.

In terms of biological role, this protein binds to the 23S rRNA, and is important in its secondary structure. It is located near the subunit interface in the base of the L7/L12 stalk, and near the tRNA binding site of the peptidyltransferase center. The sequence is that of Large ribosomal subunit protein uL6 from Erythrobacter litoralis (strain HTCC2594).